We begin with the raw amino-acid sequence, 131 residues long: Protein TAP2 (131 aa).

Residues 1–22 (MAKSSPTYTVLFLLGLLALSTA) form the signal peptide. The segment at 75-101 (ARSGGETDVKKMEGSMPDQGKTAGRDQ) is disordered.

As to expression, tapetum of anthers.

In Antirrhinum majus (Garden snapdragon), this protein is Protein TAP2 (TAP2).